The primary structure comprises 253 residues: MVTKRIIPCLDVHNGRVVKGVNFVNIRDAGDPVEIASYYDKAGADELTFLDITASAEARNIMIDVVRRVAEQVFIPFTVGGGIRTVEDFREILKAGADKVSINSAAVKRPELISEAASRFGSQCVVVAIDAKRRDDNSGWDVYINGGRINTGKDAVEWAVEVEKLGAGEILLTSMDCDGTKKGYDIELTRKVSESVRIPVIASGGAGTMEHFREALVEGKADAVLAASLFHYREIEIMELKKYLKENGIEIRM.

Active-site residues include aspartate 11 and aspartate 130.

Belongs to the HisA/HisF family. Heterodimer of HisH and HisF.

The protein localises to the cytoplasm. It carries out the reaction 5-[(5-phospho-1-deoxy-D-ribulos-1-ylimino)methylamino]-1-(5-phospho-beta-D-ribosyl)imidazole-4-carboxamide + L-glutamine = D-erythro-1-(imidazol-4-yl)glycerol 3-phosphate + 5-amino-1-(5-phospho-beta-D-ribosyl)imidazole-4-carboxamide + L-glutamate + H(+). It participates in amino-acid biosynthesis; L-histidine biosynthesis; L-histidine from 5-phospho-alpha-D-ribose 1-diphosphate: step 5/9. In terms of biological role, IGPS catalyzes the conversion of PRFAR and glutamine to IGP, AICAR and glutamate. The HisF subunit catalyzes the cyclization activity that produces IGP and AICAR from PRFAR using the ammonia provided by the HisH subunit. The polypeptide is Imidazole glycerol phosphate synthase subunit HisF (Acetivibrio thermocellus (strain ATCC 27405 / DSM 1237 / JCM 9322 / NBRC 103400 / NCIMB 10682 / NRRL B-4536 / VPI 7372) (Clostridium thermocellum)).